Here is a 67-residue protein sequence, read N- to C-terminus: Large ribosomal subunit protein uL30 (67 aa).

Belongs to the universal ribosomal protein uL30 family. Part of the 50S ribosomal subunit.

In Thermotoga petrophila (strain ATCC BAA-488 / DSM 13995 / JCM 10881 / RKU-1), this protein is Large ribosomal subunit protein uL30.